Consider the following 179-residue polypeptide: Large ribosomal subunit protein uL5 (179 aa).

Belongs to the universal ribosomal protein uL5 family. Part of the 50S ribosomal subunit; part of the 5S rRNA/L5/L18/L25 subcomplex. Contacts the 5S rRNA and the P site tRNA. Forms a bridge to the 30S subunit in the 70S ribosome.

This is one of the proteins that bind and probably mediate the attachment of the 5S RNA into the large ribosomal subunit, where it forms part of the central protuberance. In the 70S ribosome it contacts protein S13 of the 30S subunit (bridge B1b), connecting the 2 subunits; this bridge is implicated in subunit movement. Contacts the P site tRNA; the 5S rRNA and some of its associated proteins might help stabilize positioning of ribosome-bound tRNAs. The polypeptide is Large ribosomal subunit protein uL5 (Herminiimonas arsenicoxydans).